A 419-amino-acid chain; its full sequence is E3 ubiquitin-protein ligase RNF130 (419 aa).

Residues 1-27 form the signal peptide; sequence MSGAARAGPARLAALALLTCSLWPTRA. Topologically, residues 28 to 194 are extracellular; sequence DNASQEYYTA…MPPKNFSRGS (167 aa). N-linked (GlcNAc...) asparagine glycans are attached at residues asparagine 29, asparagine 40, asparagine 112, asparagine 135, asparagine 172, and asparagine 189. Positions 105–176 constitute a PA domain; sequence IALLQRGNCT…SYLEKNISVQ (72 aa). Residues 195 to 217 traverse the membrane as a helical segment; sequence LVFVSISFIVLMIISSAWLIFYF. The Cytoplasmic segment spans residues 218-419; the sequence is IQKIRYTNAR…SLNANEVEWF (202 aa). The segment at 264–305 adopts an RING-type zinc-finger fold; the sequence is CAVCIESYKQNDVVRVLPCKHVFHKSCVDPWLSEHCTCPMCK. A Phosphoserine modification is found at serine 341.

In terms of tissue distribution, in testis sections, expressed in interstitial tissue and seminiferous tubules. In tubules, expression is mainly in postmeiotic germ cells and to a much lesser extent in Sertoli cells (at protein level). Expressed at high levels in liver, lung, stomach, heart and thymus.

Its subcellular location is the membrane. The protein resides in the cytoplasm. It carries out the reaction S-ubiquitinyl-[E2 ubiquitin-conjugating enzyme]-L-cysteine + [acceptor protein]-L-lysine = [E2 ubiquitin-conjugating enzyme]-L-cysteine + N(6)-ubiquitinyl-[acceptor protein]-L-lysine.. It functions in the pathway protein modification; protein ubiquitination. Its function is as follows. Acts as an E3 ubiquitin-protein ligase. May have a role during the programmed cell death of hematopoietic cells. The chain is E3 ubiquitin-protein ligase RNF130 from Rattus norvegicus (Rat).